The following is a 186-amino-acid chain: NADH-quinone oxidoreductase subunit B (186 aa).

Cys-44, Cys-45, Cys-110, and Cys-139 together coordinate [4Fe-4S] cluster.

The protein belongs to the complex I 20 kDa subunit family. As to quaternary structure, NDH-1 is composed of 14 different subunits. Subunits NuoB, C, D, E, F, and G constitute the peripheral sector of the complex. It depends on [4Fe-4S] cluster as a cofactor.

The protein localises to the cell inner membrane. It carries out the reaction a quinone + NADH + 5 H(+)(in) = a quinol + NAD(+) + 4 H(+)(out). Its function is as follows. NDH-1 shuttles electrons from NADH, via FMN and iron-sulfur (Fe-S) centers, to quinones in the respiratory chain. The immediate electron acceptor for the enzyme in this species is believed to be ubiquinone. Couples the redox reaction to proton translocation (for every two electrons transferred, four hydrogen ions are translocated across the cytoplasmic membrane), and thus conserves the redox energy in a proton gradient. The chain is NADH-quinone oxidoreductase subunit B from Leptospira borgpetersenii serovar Hardjo-bovis (strain JB197).